Here is a 249-residue protein sequence, read N- to C-terminus: Putative TrmH family tRNA/rRNA methyltransferase (249 aa).

Residues glycine 196, isoleucine 216, and leucine 225 each contribute to the S-adenosyl-L-methionine site.

It belongs to the class IV-like SAM-binding methyltransferase superfamily. RNA methyltransferase TrmH family.

This is Putative TrmH family tRNA/rRNA methyltransferase from Staphylococcus haemolyticus (strain JCSC1435).